We begin with the raw amino-acid sequence, 604 residues long: Putative sodium-dependent multivitamin transporter (604 aa).

6 helical membrane passes run 4–24 (LGAW…AIGI), 48–68 (VAPV…ILGV), 78–98 (MFVV…YLII), 134–154 (VLYM…VTGL), 160–180 (IVIV…KAVL), and 188–208 (LLMF…AGSL). N-linked (GlcNAc...) asparagine glycosylation is found at N222 and N225. 7 helical membrane passes run 234–254 (HTWF…YGVN), 273–293 (ALWW…FSGL), 331–351 (LAGL…SSII), 389–409 (LFFG…GGLL), 413–433 (LSIF…GMYV), 440–460 (GAIG…FGQP), and 511–531 (ALGF…FALL).

This sequence belongs to the sodium:solute symporter (SSF) (TC 2.A.21) family.

It is found in the cell membrane. This Drosophila melanogaster (Fruit fly) protein is Putative sodium-dependent multivitamin transporter.